The primary structure comprises 413 residues: Tyrosine--tRNA ligase (413 aa).

Positions 59-68 match the 'HIGH' region motif; it reads PTAPDIHLGH. Residues 243 to 247 carry the 'KMSKS' region motif; sequence KMSKS. Position 246 (Lys246) interacts with ATP. The 61-residue stretch at 351–411 folds into the S4 RNA-binding domain; it reads LAIGQLLKQA…GKRRFARVTL (61 aa).

The protein belongs to the class-I aminoacyl-tRNA synthetase family. TyrS type 2 subfamily. As to quaternary structure, homodimer.

The protein localises to the cytoplasm. The catalysed reaction is tRNA(Tyr) + L-tyrosine + ATP = L-tyrosyl-tRNA(Tyr) + AMP + diphosphate + H(+). Catalyzes the attachment of tyrosine to tRNA(Tyr) in a two-step reaction: tyrosine is first activated by ATP to form Tyr-AMP and then transferred to the acceptor end of tRNA(Tyr). In Burkholderia thailandensis (strain ATCC 700388 / DSM 13276 / CCUG 48851 / CIP 106301 / E264), this protein is Tyrosine--tRNA ligase.